Here is a 399-residue protein sequence, read N- to C-terminus: Tyrosine--tRNA ligase (399 aa).

Tyr-36 contributes to the L-tyrosine binding site. The short motif at 41–50 (PTAPSLHIGN) is the 'HIGH' region element. 2 residues coordinate L-tyrosine: Tyr-166 and Gln-170. Positions 226-230 (KMGKS) match the 'KMSKS' region motif. Residue Lys-229 participates in ATP binding. Residues 332-395 (TRLVDVIVDL…KKRFVTVQVI (64 aa)) enclose the S4 RNA-binding domain.

The protein belongs to the class-I aminoacyl-tRNA synthetase family. TyrS type 1 subfamily. As to quaternary structure, homodimer.

It is found in the cytoplasm. It carries out the reaction tRNA(Tyr) + L-tyrosine + ATP = L-tyrosyl-tRNA(Tyr) + AMP + diphosphate + H(+). In terms of biological role, catalyzes the attachment of tyrosine to tRNA(Tyr) in a two-step reaction: tyrosine is first activated by ATP to form Tyr-AMP and then transferred to the acceptor end of tRNA(Tyr). The protein is Tyrosine--tRNA ligase of Mycoplasma pneumoniae (strain ATCC 29342 / M129 / Subtype 1) (Mycoplasmoides pneumoniae).